Consider the following 193-residue polypeptide: Calcium-binding protein E63-1 (193 aa).

EF-hand domains lie at V35–N70, V71–L106, D127–P162, and L163–L193. The Ca(2+) site is built by D48, N50, D52, R54, and E59. The Ca(2+) site is built by D140, D142, N144, E151, D176, D178, D180, R182, and E187.

In Drosophila melanogaster (Fruit fly), this protein is Calcium-binding protein E63-1 (Eip63F-1).